Consider the following 223-residue polypeptide: Deoxyribose-phosphate aldolase (223 aa).

The Proton donor/acceptor role is filled by Asp91. Lys153 (schiff-base intermediate with acetaldehyde) is an active-site residue. Catalysis depends on Lys182, which acts as the Proton donor/acceptor.

This sequence belongs to the DeoC/FbaB aldolase family. DeoC type 1 subfamily.

It localises to the cytoplasm. The enzyme catalyses 2-deoxy-D-ribose 5-phosphate = D-glyceraldehyde 3-phosphate + acetaldehyde. The protein operates within carbohydrate degradation; 2-deoxy-D-ribose 1-phosphate degradation; D-glyceraldehyde 3-phosphate and acetaldehyde from 2-deoxy-alpha-D-ribose 1-phosphate: step 2/2. Catalyzes a reversible aldol reaction between acetaldehyde and D-glyceraldehyde 3-phosphate to generate 2-deoxy-D-ribose 5-phosphate. The sequence is that of Deoxyribose-phosphate aldolase from Streptococcus pyogenes serotype M1.